The primary structure comprises 279 residues: Putative short-chain type dehydrogenase/reductase MSMEG_6031/MSMEI_5872 (279 aa).

11 to 33 (FITGAARGQGRSHAVRLAEEGAD) contacts NAD(+). Lys-65 participates in a covalent cross-link: Isoglutamyl lysine isopeptide (Lys-Gln) (interchain with Q-Cter in protein Pup). Position 158 (Ser-158) interacts with substrate. Tyr-171 serves as the catalytic Proton acceptor.

Belongs to the short-chain dehydrogenases/reductases (SDR) family.

This chain is Putative short-chain type dehydrogenase/reductase MSMEG_6031/MSMEI_5872, found in Mycolicibacterium smegmatis (strain ATCC 700084 / mc(2)155) (Mycobacterium smegmatis).